Reading from the N-terminus, the 435-residue chain is E3 ubiquitin-protein ligase RING1 (435 aa).

The RING-type zinc finger occupies cysteine 46–arginine 86. Residues lysine 144–glycine 322 form a disordered region. Over residues lysine 157–asparagine 170 the composition is skewed to gly residues. Composition is skewed to low complexity over residues glycine 171 to glycine 188, serine 202 to serine 211, serine 222 to threonine 251, and serine 259 to serine 278. A Phosphoserine modification is found at serine 202. Serine 266 is subject to Phosphoserine. Position 267 is a phosphothreonine (threonine 267). Residue serine 269 is modified to Phosphoserine. Acidic residues predominate over residues serine 309–glycine 322.

As to quaternary structure, interacts with ORD. Component of PRC1 complex, which contains many PcG proteins like Pc, ph, Scm, Psc, Sce and also chromatin remodeling proteins such as histone deacetylases. This complex is distinct from the Esc/E(z) complex, at least composed of esc, E(z), Su(z)12, HDAC1/Rpd3 and Caf1-55. The two complexes however cooperate and interact together during the first 3 hours of development to establish PcG silencing. As to expression, ubiquitously expressed in syncytial blastoderm embryos. Ubiquitously expressed until stage 11. Then, it is only expressed in the neuroectoderm. Later in embryonic development, it is only expressed in the CNS. In larvae, it is expressed in all imaginal disks. Expressed in the male and female gonads.

The protein resides in the nucleus. It localises to the chromosome. The enzyme catalyses S-ubiquitinyl-[E2 ubiquitin-conjugating enzyme]-L-cysteine + [acceptor protein]-L-lysine = [E2 ubiquitin-conjugating enzyme]-L-cysteine + N(6)-ubiquitinyl-[acceptor protein]-L-lysine.. Its pathway is protein modification; protein ubiquitination. E3 ubiquitin-protein ligase that mediates monoubiquitination of 'Lys-118' of histone H2A, thereby playing a central role in histone code and gene regulation. H2A 'Lys-118' ubiquitination gives a specific tag for epigenetic transcriptional repression. Polycomb group (PcG) protein. PcG proteins act by forming multiprotein complexes, which are required to maintain the transcriptionally repressive state of homeotic genes throughout development. PcG proteins are not required to initiate repression, but to maintain it during later stages of development. PcG complexes act via modification of histones, such as methylation, deacetylation, ubiquitination rendering chromatin heritably changed in its expressibility. May play a role in meiotic sister chromatid cohesion. The chain is E3 ubiquitin-protein ligase RING1 (Sce) from Drosophila melanogaster (Fruit fly).